Consider the following 149-residue polypeptide: Large ribosomal subunit protein bL9 (149 aa).

This sequence belongs to the bacterial ribosomal protein bL9 family.

Its function is as follows. Binds to the 23S rRNA. The protein is Large ribosomal subunit protein bL9 of Xylella fastidiosa (strain 9a5c).